Consider the following 77-residue polypeptide: Defensin-like protein 161 (77 aa).

Positions 1–27 (MAKLSCSYLLVFMLVFSAILMVEKVEG) are cleaved as a signal peptide. Cystine bridges form between Cys30–Cys77, Cys40–Cys59, Cys45–Cys71, and Cys49–Cys73.

Belongs to the DEFL family.

The protein localises to the secreted. The polypeptide is Defensin-like protein 161 (LCR27) (Arabidopsis thaliana (Mouse-ear cress)).